A 26-amino-acid polypeptide reads, in one-letter code: Toxin TdII-1 (26 aa).

Belongs to the long (4 C-C) scorpion toxin superfamily. Sodium channel inhibitor family. Beta subfamily. As to expression, expressed by the venom gland.

It is found in the secreted. In terms of biological role, beta toxins bind voltage-independently at site-4 of sodium channels (Nav) and shift the voltage of activation toward more negative potentials thereby affecting sodium channel activation and promoting spontaneous and repetitive firing. This toxin is active against mammals and crustaceans. The chain is Toxin TdII-1 from Tityus discrepans (Venezuelan scorpion).